The primary structure comprises 631 residues: Glutamyl-tRNA(Gln) amidotransferase subunit E (631 aa).

It belongs to the GatB/GatE family. GatE subfamily. Heterodimer of GatD and GatE.

It catalyses the reaction L-glutamyl-tRNA(Gln) + L-glutamine + ATP + H2O = L-glutaminyl-tRNA(Gln) + L-glutamate + ADP + phosphate + H(+). Its function is as follows. Allows the formation of correctly charged Gln-tRNA(Gln) through the transamidation of misacylated Glu-tRNA(Gln) in organisms which lack glutaminyl-tRNA synthetase. The reaction takes place in the presence of glutamine and ATP through an activated gamma-phospho-Glu-tRNA(Gln). The GatDE system is specific for glutamate and does not act on aspartate. The chain is Glutamyl-tRNA(Gln) amidotransferase subunit E from Methanococcus maripaludis (strain C7 / ATCC BAA-1331).